Reading from the N-terminus, the 84-residue chain is Translation initiation factor IF-1, chloroplastic (84 aa).

Residues methionine 1–arginine 72 form the S1-like domain.

It belongs to the IF-1 family. As to quaternary structure, component of the 30S ribosomal translation pre-initiation complex which assembles on the 30S ribosome in the order IF-2 and IF-3, IF-1 and N-formylmethionyl-tRNA(fMet); mRNA recruitment can occur at any time during PIC assembly.

The protein localises to the plastid. It localises to the chloroplast. Functionally, one of the essential components for the initiation of protein synthesis. Stabilizes the binding of IF-2 and IF-3 on the 30S subunit to which N-formylmethionyl-tRNA(fMet) subsequently binds. Helps modulate mRNA selection, yielding the 30S pre-initiation complex (PIC). Upon addition of the 50S ribosomal subunit IF-1, IF-2 and IF-3 are released leaving the mature 70S translation initiation complex. The polypeptide is Translation initiation factor IF-1, chloroplastic (Spirogyra maxima (Green alga)).